A 231-amino-acid polypeptide reads, in one-letter code: Uridylate cyclase (231 aa).

Residues 46–178 form the Guanylate cyclase domain; that stretch reads TVLYADLDGS…RAANYAAKLT (133 aa). Tyr-49 lines the a ribonucleoside 5'-triphosphate pocket. Asp-51 and Asp-95 together coordinate Mn(2+). A ribonucleoside 5'-triphosphate is bound at residue Arg-96.

This sequence belongs to the adenylyl cyclase class-4/guanylyl cyclase family. Pyrimidine cyclase subfamily. In terms of assembly, homodimer. Requires Mn(2+) as cofactor.

The protein localises to the cytoplasm. It carries out the reaction UTP = 3',5'-cyclic UMP + diphosphate. In terms of biological role, pycsar (pyrimidine cyclase system for antiphage resistance) provides immunity against bacteriophage. The pyrimidine cyclase (PycC) synthesizes cyclic nucleotides in response to infection; these serve as specific second messenger signals. The signal activates the adjacent effector, leading to bacterial cell death and abortive phage infection. A clade B Pycsar system. The pyrimidine cyclase gene of a two-gene Pycsar system, generates cyclic UMP (cUMP) from UTP probably in response to bacteriophage infection. Expression of this and adjacent effector XpPycTIR (AC P0DV29) confers resistance to bacteriophage T7. When cells expressing the Pycsar system are infected phage T7 at low multiplicity of infection (0.2 MOI) the culture survives, at 2.0 MOI bacteria enter growth arrest. The same cells enter growth arrest after exposure to 2.5 mM cUMP but not cCMP; the effector protein responds only to the cUMP produced by its cognate NTP cyclase. This is Uridylate cyclase from Xanthomonas perforans.